The chain runs to 111 residues: Nucleoid-associated protein TTE0040 (111 aa).

This sequence belongs to the YbaB/EbfC family. In terms of assembly, homodimer.

The protein localises to the cytoplasm. The protein resides in the nucleoid. Functionally, binds to DNA and alters its conformation. May be involved in regulation of gene expression, nucleoid organization and DNA protection. The protein is Nucleoid-associated protein TTE0040 of Caldanaerobacter subterraneus subsp. tengcongensis (strain DSM 15242 / JCM 11007 / NBRC 100824 / MB4) (Thermoanaerobacter tengcongensis).